Reading from the N-terminus, the 375-residue chain is Carbamoyl phosphate synthase small chain (375 aa).

Residues 1-184 (MVSLYLENGL…LDYKPFDEKI (184 aa)) are CPSase. Residues S44, G240, and G242 each coordinate L-glutamine. In terms of domain architecture, Glutamine amidotransferase type-1 spans 188–375 (IIAVLDFGAK…KEFVGLLEGF (188 aa)). The active-site Nucleophile is the C268. 4 residues coordinate L-glutamine: L269, Q272, N310, and Y313. Active-site residues include H351 and E353.

This sequence belongs to the CarA family. In terms of assembly, composed of two chains; the small (or glutamine) chain promotes the hydrolysis of glutamine to ammonia, which is used by the large (or ammonia) chain to synthesize carbamoyl phosphate. Tetramer of heterodimers (alpha,beta)4.

The catalysed reaction is hydrogencarbonate + L-glutamine + 2 ATP + H2O = carbamoyl phosphate + L-glutamate + 2 ADP + phosphate + 2 H(+). It catalyses the reaction L-glutamine + H2O = L-glutamate + NH4(+). It participates in amino-acid biosynthesis; L-arginine biosynthesis; carbamoyl phosphate from bicarbonate: step 1/1. The protein operates within pyrimidine metabolism; UMP biosynthesis via de novo pathway; (S)-dihydroorotate from bicarbonate: step 1/3. Its function is as follows. Small subunit of the glutamine-dependent carbamoyl phosphate synthetase (CPSase). CPSase catalyzes the formation of carbamoyl phosphate from the ammonia moiety of glutamine, carbonate, and phosphate donated by ATP, constituting the first step of 2 biosynthetic pathways, one leading to arginine and/or urea and the other to pyrimidine nucleotides. The small subunit (glutamine amidotransferase) binds and cleaves glutamine to supply the large subunit with the substrate ammonia. The protein is Carbamoyl phosphate synthase small chain of Helicobacter pylori (strain J99 / ATCC 700824) (Campylobacter pylori J99).